Here is a 174-residue protein sequence, read N- to C-terminus: Frataxin homolog, mitochondrial (174 aa).

The transit peptide at 1–21 directs the protein to the mitochondrion; sequence MIKRSLASLVRVSSVMGRRYM.

This sequence belongs to the frataxin family. As to quaternary structure, monomer. Forms a 24-mer complex made up of 8 copies of a trimeric subcomplex. Increments in mitochondrial iron uptake induce stepwise assembly of species ranging from trimers to 24-mers. Interacts with ISU1 with a 1 to 1 stoichiometry; the interaction is direct. Interacts with YHB1, SDH1, SDH2, AIM45 and CIR1. Processed in two steps by mitochondrial processing peptidase (MPP). MPP first cleaves the precursor to intermediate form and subsequently converts the intermediate to mature size protein.

Its subcellular location is the mitochondrion matrix. The catalysed reaction is 4 Fe(2+) + O2 + 4 H(+) = 4 Fe(3+) + 2 H2O. Functionally, promotes the biosynthesis of heme as well as the assembly and repair of iron-sulfur clusters by delivering Fe(2+) to proteins involved in these pathways. Plays a role in the protection against iron-catalyzed oxidative stress through its ability to catalyze the oxidation of Fe(2+) to Fe(3+). Can store large amounts of the metal in the form of a ferrihydrite mineral by oligomerization. May be involved in regulation of the mitochondrial electron transport chain. The sequence is that of Frataxin homolog, mitochondrial from Saccharomyces cerevisiae (strain ATCC 204508 / S288c) (Baker's yeast).